Consider the following 176-residue polypeptide: ATP-dependent protease subunit HslV (176 aa).

The active site involves threonine 2. Glycine 157, cysteine 160, and threonine 163 together coordinate Na(+).

This sequence belongs to the peptidase T1B family. HslV subfamily. As to quaternary structure, a double ring-shaped homohexamer of HslV is capped on each side by a ring-shaped HslU homohexamer. The assembly of the HslU/HslV complex is dependent on binding of ATP.

The protein resides in the cytoplasm. It catalyses the reaction ATP-dependent cleavage of peptide bonds with broad specificity.. With respect to regulation, allosterically activated by HslU binding. Its function is as follows. Protease subunit of a proteasome-like degradation complex believed to be a general protein degrading machinery. The protein is ATP-dependent protease subunit HslV of Marinobacter nauticus (strain ATCC 700491 / DSM 11845 / VT8) (Marinobacter aquaeolei).